Here is a 328-residue protein sequence, read N- to C-terminus: Gonadotropin-releasing hormone receptor (328 aa).

Over 1 to 38 (MANRAYLEQKQTQCSIINSSFSMTHRDLPTLTLSGKIR) the chain is Extracellular. Asn18 is a glycosylation site (N-linked (GlcNAc...) asparagine). The chain crosses the membrane as a helical span at residues 39–58 (VMVTFFLFLVSTAFNASFLM). At 59–77 (KLQRQTQKKEEVKKLTRMK) the chain is on the cytoplasmic side. The helical transmembrane segment at 78 to 97 (VLLKHLTLANLLETVIVMPL) threads the bilayer. Over 98–115 (DGIWNVTVQWYAGEFLCK) the chain is Extracellular. Residue Asn102 is glycosylated (N-linked (GlcNAc...) asparagine). Residues Cys114 and Cys196 are joined by a disulfide bond. Residues 116–137 (ALSYLKLFSMYAPAFMMVVISL) traverse the membrane as a helical segment. Topologically, residues 138 to 164 (DRFLAITRPLAVKSNTKVGQSLIAVAW) are cytoplasmic. A helical membrane pass occupies residues 165–184 (FLSIVLAGPQLYIFRMIYVE). At 185-212 (DISGQTGNFSQCVTHCSFPEWWQEAFYN) the chain is on the extracellular side. Asn192 carries an N-linked (GlcNAc...) asparagine glycan. The chain crosses the membrane as a helical span at residues 213–232 (LLTFSCLFIGPLLIMLVCNA). Over 233–281 (KIIFTLTQVLHQDPHELQLNRSKNNIPRARLRTLKMTVAFATLFTICWT) the chain is Cytoplasmic. A helical transmembrane segment spans residues 282–300 (PYYVLGIWYWFDPEMLNRV). At 301–306 (SDPVNH) the chain is on the extracellular side. A helical transmembrane segment spans residues 307–326 (FFFLFGLLNPCFDPLIYGYF). Residues 327–328 (SL) are Cytoplasmic-facing.

Belongs to the G-protein coupled receptor 1 family.

Its subcellular location is the cell membrane. Receptor for gonadotropin releasing hormone (GnRH) that mediates the action of GnRH to stimulate the secretion of the gonadotropic hormones luteinizing hormone (LH) and follicle-stimulating hormone (FSH). This receptor mediates its action by association with G-proteins that activate a phosphatidylinositol-calcium second messenger system. The protein is Gonadotropin-releasing hormone receptor (GNRHR) of Trichosurus vulpecula (Brush-tailed possum).